Here is a 761-residue protein sequence, read N- to C-terminus: Xaa-Pro dipeptidyl-peptidase (761 aa).

Catalysis depends on charge relay system residues S347, D467, and H497.

It belongs to the peptidase S15 family. In terms of assembly, homodimer.

The protein resides in the cytoplasm. It carries out the reaction Hydrolyzes Xaa-Pro-|- bonds to release unblocked, N-terminal dipeptides from substrates including Ala-Pro-|-p-nitroanilide and (sequentially) Tyr-Pro-|-Phe-Pro-|-Gly-Pro-|-Ile.. Removes N-terminal dipeptides sequentially from polypeptides having unsubstituted N-termini provided that the penultimate residue is proline. The polypeptide is Xaa-Pro dipeptidyl-peptidase (Streptococcus agalactiae serotype V (strain ATCC BAA-611 / 2603 V/R)).